A 483-amino-acid polypeptide reads, in one-letter code: Glutamyl-tRNA(Gln) amidotransferase subunit A (483 aa).

Active-site charge relay system residues include lysine 76 and serine 151. The active-site Acyl-ester intermediate is serine 175.

This sequence belongs to the amidase family. GatA subfamily. Heterotrimer of A, B and C subunits.

It catalyses the reaction L-glutamyl-tRNA(Gln) + L-glutamine + ATP + H2O = L-glutaminyl-tRNA(Gln) + L-glutamate + ADP + phosphate + H(+). Its function is as follows. Allows the formation of correctly charged Gln-tRNA(Gln) through the transamidation of misacylated Glu-tRNA(Gln) in organisms which lack glutaminyl-tRNA synthetase. The reaction takes place in the presence of glutamine and ATP through an activated gamma-phospho-Glu-tRNA(Gln). The chain is Glutamyl-tRNA(Gln) amidotransferase subunit A from Pseudomonas fluorescens (strain ATCC BAA-477 / NRRL B-23932 / Pf-5).